Consider the following 207-residue polypeptide: 2,3-bisphosphoglycerate-dependent phosphoglycerate mutase (207 aa).

Substrate contacts are provided by residues 10–17, 23–24, R62, 89–92, K100, 116–117, and 160–161; these read RHGQSEWN, TG, ERDY, RR, and GN. Catalysis depends on H11, which acts as the Tele-phosphohistidine intermediate. E89 acts as the Proton donor/acceptor in catalysis.

It belongs to the phosphoglycerate mutase family. BPG-dependent PGAM subfamily. In terms of assembly, homodimer.

The catalysed reaction is (2R)-2-phosphoglycerate = (2R)-3-phosphoglycerate. The protein operates within carbohydrate degradation; glycolysis; pyruvate from D-glyceraldehyde 3-phosphate: step 3/5. Its function is as follows. Catalyzes the interconversion of 2-phosphoglycerate and 3-phosphoglycerate. The polypeptide is 2,3-bisphosphoglycerate-dependent phosphoglycerate mutase (Bradyrhizobium sp. (strain ORS 278)).